We begin with the raw amino-acid sequence, 66 residues long: U10-theraphotoxin-Cg1a 2 (66 aa).

Residues 1–21 form the signal peptide; sequence MKTSVLFVIFGLALLLCLSFA. The propeptide occupies 22 to 29; that stretch reads AELEDTGR. Cystine bridges form between Cys-31–Cys-46, Cys-38–Cys-51, and Cys-45–Cys-58.

The protein belongs to the neurotoxin 10 (Hwtx-1) family. 29 (Jztx-13) subfamily. In terms of tissue distribution, expressed by the venom gland.

Its subcellular location is the secreted. In terms of biological role, probable ion channel inhibitor. The sequence is that of U10-theraphotoxin-Cg1a 2 from Chilobrachys guangxiensis (Chinese earth tiger tarantula).